A 521-amino-acid chain; its full sequence is MATIRPDDKAIDAAARHYGITLDKTARLEWPALIDGALGSYDVVDQLYADEATPPTTSREHAVPSASENPLSAWYVTTSIPPTSDGVLTGRRVAIKDNVTVAGVPMMNGSRTVEGFTPSRDATVVTRLLAAGATVAGKAVCEDLCFSGSSFTPASGPVRNPWDRQREAGGSSGGSAALVANGDVDFAIGGDQGGSIRIPAAFCGVVGHKPTFGLVPYTGAFPIERTIDHLGPITRTVHDAALMLSVIAGRDGNDPRQADSVEAGDYLSTLDSDVDGLRIGIVREGFGHAVSQPEVDDAVRAAAHSLTEIGCTVEEVNIPWHLHAFHIWNVIATDGGAYQMLDGNGYGMNAEGLYDPELMAHFASRRIQHADALSETVKLVALTGHHGITTLGGASYGKARNLVPLARAAYDTALRQFDVLVMPTLPYVASELPAKDVDRATFITKALGMIANTAPFDVTGHPSLSVPAGLVNGLPVGMMITGRHFDDATVLRVGRAFEKLRGAFPTPAERASNSAPQLSPA.

Residues K96 and S171 each act as charge relay system in the active site. The interval 155-174 (SGPVRNPWDRQREAGGSSGG) is disordered. S195 serves as the catalytic Acyl-ester intermediate.

It belongs to the amidase family. As to quaternary structure, homodimer.

The enzyme catalyses a monocarboxylic acid amide + H2O = a monocarboxylate + NH4(+). Hydrolyzes propionamides efficiently, and also at a lower efficiency, acetamide, acrylamide and indoleacetamide. This enzyme seems to be stereospecific and can lead to the production of a single enantiomer. The chain is Amidase (amdA) from Rhodococcus erythropolis (Arthrobacter picolinophilus).